A 274-amino-acid chain; its full sequence is Probable cyclic nucleotide phosphodiesterase RPA0124 (274 aa).

The Fe cation site is built by aspartate 8, histidine 10, aspartate 49, asparagine 79, histidine 155, histidine 194, and histidine 196. Residues histidine 10, aspartate 49, and asparagine 79–histidine 80 contribute to the AMP site. Histidine 196 is an AMP binding site.

The protein belongs to the cyclic nucleotide phosphodiesterase class-III family. Requires Fe(2+) as cofactor.

In Rhodopseudomonas palustris (strain ATCC BAA-98 / CGA009), this protein is Probable cyclic nucleotide phosphodiesterase RPA0124.